The chain runs to 250 residues: MAVTMRQMLEAGVHFGHQTRFWNPKMAPFIFGHRNKIHIINLEKTLPMYNDALKYVRQLAANRGTILFVGTKRQSRDTIAEAAQRAGMPYVNARWLGGMLTNFKTLKVSIKRLKDMEAAVEAGELEKMSKKEALLFEREIAKLQKSIGGVKDMGGIPDAIFVVDVGYHKIAVTEANKLGVPVIAVVDTNHSPEGVDYVIPGNDDASKAVALYTQGVADAILEGRANAVNEVVQAVRGGDGDEFVEVNGEA.

This sequence belongs to the universal ribosomal protein uS2 family.

This is Small ribosomal subunit protein uS2 from Paraburkholderia phymatum (strain DSM 17167 / CIP 108236 / LMG 21445 / STM815) (Burkholderia phymatum).